Here is a 371-residue protein sequence, read N- to C-terminus: Probable trehalose-phosphate phosphatase 1 (371 aa).

The protein belongs to the trehalose phosphatase family. The cofactor is a divalent metal cation. As to expression, expressed in roots and shoots.

The enzyme catalyses alpha,alpha-trehalose 6-phosphate + H2O = alpha,alpha-trehalose + phosphate. It functions in the pathway glycan biosynthesis; trehalose biosynthesis. Functionally, removes the phosphate from trehalose 6-phosphate to produce free trehalose. Trehalose accumulation in plant improves abiotic stress tolerance. In Oryza sativa subsp. japonica (Rice), this protein is Probable trehalose-phosphate phosphatase 1 (TPP1).